The sequence spans 300 residues: Haloalkane dehalogenase (300 aa).

Positions 32 to 155 (AIVFQHGNPT…PAVRGVFQGF (124 aa)) constitute an AB hydrolase-1 domain. Asp109 serves as the catalytic Nucleophile. Glu133 acts as the Proton donor in catalysis. The active-site Proton acceptor is His273.

Belongs to the haloalkane dehalogenase family. Type 2 subfamily. In terms of assembly, monomer.

It catalyses the reaction 1-haloalkane + H2O = a halide anion + a primary alcohol + H(+). Catalyzes hydrolytic cleavage of carbon-halogen bonds in halogenated aliphatic compounds, leading to the formation of the corresponding primary alcohols, halide ions and protons. The protein is Haloalkane dehalogenase of Mycobacterium tuberculosis (strain ATCC 25177 / H37Ra).